We begin with the raw amino-acid sequence, 184 residues long: MSRTAYTVGALLLLLGTLLPAAEGKKKGSQGAIPPPDKAQHNDSEQTQSPQQPGSRNRGRGQGRGTAMPGEEVLESSQEALHVTERKYLKRDWCKTQPLKQTIHEEGCNSRTIINRFCYGQCNSFYIPRHIRKEEGSFQSCSFCKPKKFTTMMVTLNCPELQPPTKKKRVTRVKQCRCISIDLD.

Positions 1–24 (MSRTAYTVGALLLLLGTLLPAAEG) are cleaved as a signal peptide. A disordered region spans residues 24 to 77 (GKKKGSQGAIPPPDKAQHNDSEQTQSPQQPGSRNRGRGQGRGTAMPGEEVLESS). A glycan (N-linked (GlcNAc...) asparagine) is linked at asparagine 42. 4 disulfide bridges follow: cysteine 94–cysteine 144, cysteine 108–cysteine 158, cysteine 118–cysteine 176, and cysteine 122–cysteine 178. The CTCK domain maps to 94–184 (CKTQPLKQTI…QCRCISIDLD (91 aa)).

The protein belongs to the DAN family. In terms of assembly, homodimer; can also form homooligomers. Interacts with BMP2; can form higher oligomers with BMP2. Interacts with SLIT1 and SLIT2 in a glycosylation-dependent manner. Highly expressed in small intestine, fetal brain and colon. Expression is restricted to intestinal subepithelial myofibroblasts (ISEMFs) at the crypt base. In subjects with HMPS1, by contrast, GREM1 is expressed, not only in basal ISEMFs, but also at very high levels in epithelial cells (predominantly colonocytes), with expression extending most of the way up the sides of the crypt. Weakly expressed in brain, ovary, prostate, pancreas and skeletal muscle. In brain found in the region localized around the internal capsule in the large subcortical nuclei, including caudate, putamen, substantia nigra, thalamus and subthalamus. Predominantly expressed in normal cells including neurons, astrocytes and fibroblasts.

The protein localises to the secreted. Its function is as follows. Cytokine that may play an important role during carcinogenesis and metanephric kidney organogenesis, as a BMP antagonist required for early limb outgrowth and patterning in maintaining the FGF4-SHH feedback loop. Down-regulates the BMP4 signaling in a dose-dependent manner. Antagonist of BMP2; inhibits BMP2-mediated differentiation of osteoblasts (in vitro). Acts as inhibitor of monocyte chemotaxis. Can inhibit the growth or viability of normal cells but not transformed cells when is overexpressed. The polypeptide is Gremlin-1 (GREM1) (Homo sapiens (Human)).